The following is a 168-amino-acid chain: Short form salivary protein D7R2 (168 aa).

An N-terminal signal peptide occupies residues 1–21 (MFKKLLLSVGLVWCLISLGQA). 3 disulfides stabilise this stretch: Cys-30-Cys-62, Cys-43-Cys-168, and Cys-101-Cys-120. Noradrenaline contacts are provided by Glu-31 and Arg-46. Glu-31 is a serotonin binding site. The serotonin site is built by His-59, Tyr-118, Asp-135, and Glu-138. Residues Tyr-118, Asp-135, and Glu-138 each contribute to the histamine site. Noradrenaline is bound by residues Asp-135 and Glu-138.

This sequence belongs to the PBP/GOBP family. Female saliva (at protein level). Female salivary gland. Not detected in female carcass without salivary glands. Not detected in male tissues.

The protein resides in the secreted. Modulates blood feeding of female mosquitoes on vertebrate species by binding and sequestering different mediators involved in the host response. Binds serotonin, noradrenaline, histamine and adrenaline. Inhibits histamine-, serotonin- and noradrenaline-induced smooth muscle contraction. Exhibits vasodilating activity. The chain is Short form salivary protein D7R2 from Anopheles gambiae (African malaria mosquito).